The following is a 389-amino-acid chain: Cytochrome f (389 aa).

The first 42 residues, methionine 1–serine 42, serve as a signal peptide directing secretion. Residues tyrosine 105, cysteine 125, cysteine 128, and histidine 129 each coordinate heme. The helical transmembrane segment at leucine 355 to lysine 375 threads the bilayer.

This sequence belongs to the cytochrome f family. As to quaternary structure, the 4 large subunits of the cytochrome b6-f complex are cytochrome b6, subunit IV (17 kDa polypeptide, petD), cytochrome f and the Rieske protein, while the 4 small subunits are PetG, PetL, PetM and PetN. The complex functions as a dimer. Heme serves as cofactor.

Its subcellular location is the plastid. It is found in the chloroplast thylakoid membrane. In terms of biological role, component of the cytochrome b6-f complex, which mediates electron transfer between photosystem II (PSII) and photosystem I (PSI), cyclic electron flow around PSI, and state transitions. The protein is Cytochrome f of Pleurastrum terricola (Filamentous green alga).